A 397-amino-acid chain; its full sequence is Lysophospholipid transporter LplT (397 aa).

Over 1–17 the chain is Periplasmic; that stretch reads MSESVHTNTSLWSKGMK. A helical transmembrane segment spans residues 18–38; sequence AVIVAQFLSAFGDNALLFATL. Residues 39-52 lie on the Cytoplasmic side of the membrane; that stretch reads ALLKAQFYPEWSQP. The helical transmembrane segment at 53–73 threads the bilayer; the sequence is ILQMVFVGAYILFAPFVGQVA. Topologically, residues 74 to 90 are periplasmic; that stretch reads DSFAKGRVMMFANGLKL. The chain crosses the membrane as a helical span at residues 91-111; the sequence is LGAASICFGINPFLGYTLVGV. Topologically, residues 112–144 are cytoplasmic; that stretch reads GAAAYSPAKYGILGELTTGSKLVKANGLMEAST. Residues 145–165 form a helical membrane-spanning segment; that stretch reads IAAILLGSVAGGVLADWHVLV. A topological domain (periplasmic) is located at residue Ala166. A helical transmembrane segment spans residues 167–187; the sequence is LAACALAYGGAVVANIYIPKL. The Cytoplasmic segment spans residues 188–226; the sequence is AAARPGQSWNLINMTRSFLNACTSLWRNGETRFSLVGTS. Residues 227 to 247 form a helical membrane-spanning segment; the sequence is LFWGAGVTLRFLLVLWVPVAL. Residues 248-256 are Periplasmic-facing; the sequence is GITDNATPT. A helical transmembrane segment spans residues 257–277; the sequence is YLNAMVAIGIVVGAGAAAKLV. The Cytoplasmic portion of the chain corresponds to 278 to 280; it reads TLE. The chain crosses the membrane as a helical span at residues 281–301; it reads TVSRCMPAGILIGVVVLIFSL. Residues 302 to 304 are Periplasmic-facing; that stretch reads QHE. The helical transmembrane segment at 305–325 threads the bilayer; it reads LLPAYALLMLIGVLGGFFVVP. The Cytoplasmic portion of the chain corresponds to 326 to 343; the sequence is LNALLQERGKKSVGAGNA. A helical transmembrane segment spans residues 344–364; that stretch reads IAVQNLGENSAMLLMLGIYSL. At 365–366 the chain is on the periplasmic side; that stretch reads AV. The chain crosses the membrane as a helical span at residues 367–387; the sequence is MVGIPVVPIGIGFGALFALAI. Residues 388–397 lie on the Cytoplasmic side of the membrane; that stretch reads TALWIWQRRH.

It belongs to the major facilitator superfamily. LplT (TC 2.A.1.42) family.

It is found in the cell inner membrane. In terms of biological role, catalyzes the facilitated diffusion of 2-acyl-glycero-3-phosphoethanolamine (2-acyl-GPE) into the cell. This chain is Lysophospholipid transporter LplT, found in Escherichia coli (strain SMS-3-5 / SECEC).